Consider the following 399-residue polypeptide: Elongation factor Tu (399 aa).

Positions 10–209 (KPHVNIGTIG…EVDAYIPTPV (200 aa)) constitute a tr-type G domain. The tract at residues 19 to 26 (GHVDHGKT) is G1. Residue 19 to 26 (GHVDHGKT) participates in GTP binding. Thr-26 is a binding site for Mg(2+). Residues 60-64 (GITIA) are G2. The segment at 81–84 (DCPG) is G3. GTP is bound by residues 81 to 85 (DCPGH) and 136 to 139 (NKQD). The tract at residues 136 to 139 (NKQD) is G4. Residues 174–176 (SAL) form a G5 region.

Belongs to the TRAFAC class translation factor GTPase superfamily. Classic translation factor GTPase family. EF-Tu/EF-1A subfamily. Monomer.

It localises to the cytoplasm. The catalysed reaction is GTP + H2O = GDP + phosphate + H(+). Functionally, GTP hydrolase that promotes the GTP-dependent binding of aminoacyl-tRNA to the A-site of ribosomes during protein biosynthesis. The polypeptide is Elongation factor Tu (Helicobacter acinonychis (strain Sheeba)).